The chain runs to 275 residues: Photosystem II extrinsic protein O (275 aa).

The N-terminal stretch at 1 to 28 (MRFRTLLIAFLALCLGLITACSEGPANA) is a signal peptide.

It belongs to the PsbO family. In terms of assembly, PSII is composed of 1 copy each of membrane proteins PsbA, PsbB, PsbC, PsbD, PsbE, PsbF, PsbH, PsbI, PsbJ, PsbK, PsbL, PsbM, PsbT, PsbX, PsbY, PsbZ, Psb30/Ycf12, peripheral proteins PsbO, CyanoQ (PsbQ), PsbU, PsbV and a large number of cofactors. It forms dimeric complexes.

It localises to the cellular thylakoid membrane. Functionally, one of the extrinsic, lumenal subunits of photosystem II (PSII), which stabilize and protect the oxygen-evolving complex. PSII is a light-driven water plastoquinone oxidoreductase, using light energy to abstract electrons from H(2)O, generating a proton gradient subsequently used for ATP formation. Required for dimerization of PSII and for binding of PsbQ to PSII. This Crocosphaera subtropica (strain ATCC 51142 / BH68) (Cyanothece sp. (strain ATCC 51142)) protein is Photosystem II extrinsic protein O.